The following is a 191-amino-acid chain: Holliday junction branch migration complex subunit RuvA (191 aa).

The domain I stretch occupies residues 1-64; sequence MIGTLSGIIE…DNVPQLYGFT (64 aa). A domain II region spans residues 65–145; the sequence is DTEEQNCLKM…FNIMDKRGPS (81 aa). Residues 146-149 are flexible linker; sequence VEDS. Residues 149–191 form a domain III region; sequence SDALSALLSLGYEKTRVLNALEKVGVSHNLSDTVRFALKELSK.

It belongs to the RuvA family. As to quaternary structure, homotetramer. Forms an RuvA(8)-RuvB(12)-Holliday junction (HJ) complex. HJ DNA is sandwiched between 2 RuvA tetramers; dsDNA enters through RuvA and exits via RuvB. An RuvB hexamer assembles on each DNA strand where it exits the tetramer. Each RuvB hexamer is contacted by two RuvA subunits (via domain III) on 2 adjacent RuvB subunits; this complex drives branch migration. In the full resolvosome a probable DNA-RuvA(4)-RuvB(12)-RuvC(2) complex forms which resolves the HJ.

The protein resides in the cytoplasm. The RuvA-RuvB-RuvC complex processes Holliday junction (HJ) DNA during genetic recombination and DNA repair, while the RuvA-RuvB complex plays an important role in the rescue of blocked DNA replication forks via replication fork reversal (RFR). RuvA specifically binds to HJ cruciform DNA, conferring on it an open structure. The RuvB hexamer acts as an ATP-dependent pump, pulling dsDNA into and through the RuvAB complex. HJ branch migration allows RuvC to scan DNA until it finds its consensus sequence, where it cleaves and resolves the cruciform DNA. The sequence is that of Holliday junction branch migration complex subunit RuvA from Anaplasma phagocytophilum (strain HZ).